A 341-amino-acid polypeptide reads, in one-letter code: Spindolin (341 aa).

An N-terminal signal peptide occupies residues 1-20 (MNKLILISLIASLYQVEVDA).

Homodimer; disulfide-linked.

This protein is a spindle body protein. This is Spindolin (SPH) from Choristoneura biennis entomopoxvirus (CbEPV).